The following is a 363-amino-acid chain: Spermidine/putrescine import ATP-binding protein PotA (363 aa).

One can recognise an ABC transporter domain in the interval 5–236; that stretch reads IKLKHVRKEY…PVNDFVARFI (232 aa). 38-45 serves as a coordination point for ATP; that stretch reads GPSGSGKT.

This sequence belongs to the ABC transporter superfamily. Spermidine/putrescine importer (TC 3.A.1.11.1) family. In terms of assembly, the complex is composed of two ATP-binding proteins (PotA), two transmembrane proteins (PotB and PotC) and a solute-binding protein (PotD).

The protein resides in the cell membrane. The enzyme catalyses ATP + H2O + polyamine-[polyamine-binding protein]Side 1 = ADP + phosphate + polyamineSide 2 + [polyamine-binding protein]Side 1.. Its function is as follows. Part of the ABC transporter complex PotABCD involved in spermidine/putrescine import. Responsible for energy coupling to the transport system. The sequence is that of Spermidine/putrescine import ATP-binding protein PotA from Lactobacillus johnsonii (strain CNCM I-12250 / La1 / NCC 533).